We begin with the raw amino-acid sequence, 202 residues long: Small ribosomal subunit protein bS20c (202 aa).

Residues 1–79 constitute a chloroplast transit peptide; that stretch reads MATIVQCLSS…KPMRQLIVCE (79 aa). The interval 89–110 is disordered; that stretch reads SAAKRARQAEKRRVYNKSKKSE.

The protein belongs to the bacterial ribosomal protein bS20 family. In terms of assembly, part of the 30S ribosomal subunit.

Its subcellular location is the plastid. It localises to the chloroplast. Binds directly to 16S ribosomal RNA. In Arabidopsis thaliana (Mouse-ear cress), this protein is Small ribosomal subunit protein bS20c (RPS20).